A 135-amino-acid chain; its full sequence is Salivary protein 15 Iper-1 (135 aa).

The N-terminal stretch at 1–22 is a signal peptide; it reads MESFVAMKVVCILFLFVVAAEA. 2 N-linked (GlcNAc...) asparagine glycosylation sites follow: Asn-93 and Asn-104. Positions 116 to 135 are CD4-binding; the sequence is GPNKQTCADKSKCVGHIPGC.

The protein belongs to the salp15 family. In terms of assembly, interacts with host CD4. Interacts with host DC-SIGN (CD209). (Microbial infection) Interacts with Borrelia outer surface protein C (OspC). Expressed in salivary glands from feeding female ticks. Highly expressed 4 days after start of feeding.

It is found in the secreted. Salivary tick protein that downregulates host immune system by binding to both dendritic cells, and CD4(+) T cells. Specifically binds to the CD4 coreceptor on T cells. This interaction prevents the activation of the Src kinase, Lck, and its downstream substrate Zap-70, and results in deficient activation of PLCgamma1, the repression of calcium fluxes triggered by T-cell antigen receptor (TCR) ligation, and a subsequent reduction in interleukin-2 production. This salivary protein also binds to DC-SIGN (CD209) on dendritic cells (DC) and activates the Raf-1 kinase/MEK signaling pathway that results in down-regulating expression of pro-inflammatory cytokines. Furthermore, it inhibits T cell proliferation induced by DCs. It also inhibits in vitro keratinocyte inflammation induced by Borrelia burgdorferi or by the major outer surface protein (OspC) of Borrelia. In addition, it downregulates chemokines and monocyte chemoattractant protein 1, as well as several antimicrobial peptides such as defensins, cathelicidin, psoriasin, and RNase 7. Apart from its immunomodulatory activities, it is also associated with protection of Borrelia spirochetes from antibody-mediated killing through its binding to OspC. In vivo, tests on different immune disease animal models show promising therapeutic results, e.g., in inhibiting HIV infection, experimental autoimmune encephalomyelitis, transplantation rejection, and asthma. Its function is as follows. (Microbial infection) Protects Borrelia garinii from anti-Borrelia antibody-mediated cytotoxicity in vitro. May facilitate B.garinii transmission in mouse model. In terms of biological role, (Microbial infection) Protects Borrelia burgdorferi from anti-Borrelia antibody-mediated cytotoxicity in vitro. Functionally, (Microbial infection) Protects Borrelia afzelii from anti-Borrelia antibody-mediated cytotoxicity in vitro. This is Salivary protein 15 Iper-1 from Ixodes persulcatus (Taiga tick).